A 416-amino-acid chain; its full sequence is POC1 centriolar protein homolog A (416 aa).

WD repeat units lie at residues 16 to 55 (GHRD…RAYR), 58 to 97 (GHKD…ESVL), 100 to 139 (AHTG…IICT), 142 to 181 (EHNN…LIHT), 184 to 223 (EPGG…LLQH), 226 to 265 (VHSA…LLYT), and 268 to 307 (GHQG…VDYS). Residues 311–340 (QQKRDHRTPSAQASGAAGDPESRSGQKTEV) form a disordered region. Residues 380-412 (QLDVLTQTVAILEQRLTLTEDKLKECLEQQHQA) are a coiled coil.

Belongs to the WD repeat POC1 family.

Functionally, may play an important role in centriole assembly and/or stability and ciliogenesis. The polypeptide is POC1 centriolar protein homolog A (Danio rerio (Zebrafish)).